Here is a 457-residue protein sequence, read N- to C-terminus: Protein translocase subunit SecY (457 aa).

Transmembrane regions (helical) follow at residues 17 to 37 (IFFT…PVPG), 75 to 95 (IALG…LVVF), 118 to 138 (TRLF…KFAL), 162 to 182 (WVFY…LMWV), 195 to 215 (ISLI…GSIF), 230 to 250 (IVSL…TVLI), 287 to 307 (VIPV…GQFL), 326 to 346 (VAYS…WTAT), 386 to 406 (LLGA…GRIL), and 412 to 432 (VSYF…LDTM).

Belongs to the SecY/SEC61-alpha family. Component of the Sec protein translocase complex. Heterotrimer consisting of SecY, SecE and SecG subunits. The heterotrimers can form oligomers, although 1 heterotrimer is thought to be able to translocate proteins. Interacts with the ribosome. Interacts with SecDF, and other proteins may be involved. Interacts with SecA.

It is found in the cell inner membrane. Functionally, the central subunit of the protein translocation channel SecYEG. Consists of two halves formed by TMs 1-5 and 6-10. These two domains form a lateral gate at the front which open onto the bilayer between TMs 2 and 7, and are clamped together by SecE at the back. The channel is closed by both a pore ring composed of hydrophobic SecY resides and a short helix (helix 2A) on the extracellular side of the membrane which forms a plug. The plug probably moves laterally to allow the channel to open. The ring and the pore may move independently. The chain is Protein translocase subunit SecY from Chlamydia trachomatis serovar D (strain ATCC VR-885 / DSM 19411 / UW-3/Cx).